Reading from the N-terminus, the 412-residue chain is Serine hydroxymethyltransferase (412 aa).

(6S)-5,6,7,8-tetrahydrofolate contacts are provided by residues leucine 117 and 121–123; that span reads GHL. An N6-(pyridoxal phosphate)lysine modification is found at lysine 226.

Belongs to the SHMT family. Homodimer. Pyridoxal 5'-phosphate is required as a cofactor.

It is found in the cytoplasm. It carries out the reaction (6R)-5,10-methylene-5,6,7,8-tetrahydrofolate + glycine + H2O = (6S)-5,6,7,8-tetrahydrofolate + L-serine. It participates in one-carbon metabolism; tetrahydrofolate interconversion. Its pathway is amino-acid biosynthesis; glycine biosynthesis; glycine from L-serine: step 1/1. In terms of biological role, catalyzes the reversible interconversion of serine and glycine with tetrahydrofolate (THF) serving as the one-carbon carrier. This reaction serves as the major source of one-carbon groups required for the biosynthesis of purines, thymidylate, methionine, and other important biomolecules. Also exhibits THF-independent aldolase activity toward beta-hydroxyamino acids, producing glycine and aldehydes, via a retro-aldol mechanism. The chain is Serine hydroxymethyltransferase from Symbiobacterium thermophilum (strain DSM 24528 / JCM 14929 / IAM 14863 / T).